A 260-amino-acid chain; its full sequence is UPF0246 protein Bcep1808_2308 (260 aa).

Belongs to the UPF0246 family.

This chain is UPF0246 protein Bcep1808_2308, found in Burkholderia vietnamiensis (strain G4 / LMG 22486) (Burkholderia cepacia (strain R1808)).